A 405-amino-acid chain; its full sequence is MTQSQYRPGPDANGLFGSFGGRYVAETLMPLVLDLAREYEAAKADPKFLEELAYFQRDYIGRPNPLYFAERLTEHCGGAKIFFKREELNHTGAHKVNNCIGQVLLAKRMGKKRLIAETGAGMHGVATATVAARFGLPCVIYMGATDIERQQANVFRMKLLGAEIVPVTAGTGTLKDAMNEALRDWVTNVDDTFYLIGTVAGPHPYPAMVRDFQSIIGKETRAQLQEKEGRLPDSLIACVGGGSNAMGLFHEFLEDESVKIIGVEAGGHGVNTGKHAASLNGGVPGVLHGNRTYLLQDDDGQITDAHSISAGLDYPGIGPEHAYLHEVKRVEYVSITDDEALDAFHATCRLEGIIPALETSHALAEAIKRAPNLPKDHLMVICLSGRGDKDMQTVMNHMAAQEKQA.

Position 95 is an N6-(pyridoxal phosphate)lysine (Lys-95).

The protein belongs to the TrpB family. As to quaternary structure, tetramer of two alpha and two beta chains. The cofactor is pyridoxal 5'-phosphate.

The catalysed reaction is (1S,2R)-1-C-(indol-3-yl)glycerol 3-phosphate + L-serine = D-glyceraldehyde 3-phosphate + L-tryptophan + H2O. Its pathway is amino-acid biosynthesis; L-tryptophan biosynthesis; L-tryptophan from chorismate: step 5/5. The beta subunit is responsible for the synthesis of L-tryptophan from indole and L-serine. The chain is Tryptophan synthase beta chain from Pseudomonas putida (strain W619).